The primary structure comprises 365 residues: Aminomethyltransferase (365 aa).

Belongs to the GcvT family. The glycine cleavage system is composed of four proteins: P, T, L and H.

The enzyme catalyses N(6)-[(R)-S(8)-aminomethyldihydrolipoyl]-L-lysyl-[protein] + (6S)-5,6,7,8-tetrahydrofolate = N(6)-[(R)-dihydrolipoyl]-L-lysyl-[protein] + (6R)-5,10-methylene-5,6,7,8-tetrahydrofolate + NH4(+). In terms of biological role, the glycine cleavage system catalyzes the degradation of glycine. This chain is Aminomethyltransferase, found in Geobacillus thermodenitrificans (strain NG80-2).